The primary structure comprises 497 residues: Cysteine--tRNA ligase (497 aa).

Cys-46 serves as a coordination point for Zn(2+). The short motif at Pro-48–His-58 is the 'HIGH' region element. Residues Cys-237, His-262, and Glu-266 each coordinate Zn(2+). The 'KMSKS' region signature appears at Lys-293–Ser-297. Lys-296 contributes to the ATP binding site.

Belongs to the class-I aminoacyl-tRNA synthetase family. As to quaternary structure, monomer. Zn(2+) serves as cofactor.

The protein localises to the cytoplasm. The catalysed reaction is tRNA(Cys) + L-cysteine + ATP = L-cysteinyl-tRNA(Cys) + AMP + diphosphate. This is Cysteine--tRNA ligase from Deinococcus geothermalis (strain DSM 11300 / CIP 105573 / AG-3a).